The sequence spans 506 residues: Cytochrome P450 6a2 (506 aa).

Position 451 (C451) interacts with heme.

The protein belongs to the cytochrome P450 family. Heme serves as cofactor.

It is found in the endoplasmic reticulum membrane. Its subcellular location is the microsome membrane. Its function is as follows. Is involved in the breakdown of synthetic insecticides and may be involved in the metabolism of insect hormones. The polypeptide is Cytochrome P450 6a2 (Cyp6a2) (Drosophila melanogaster (Fruit fly)).